The sequence spans 418 residues: Tubulin alpha chain (418 aa).

GTP is bound by residues glutamine 11, glutamate 71, serine 140, glycine 144, threonine 179, asparagine 206, and asparagine 228. Glutamate 71 contributes to the Mg(2+) binding site. Glutamate 255 is a catalytic residue.

This sequence belongs to the tubulin family. In terms of assembly, dimer of alpha and beta chains. A typical microtubule is a hollow water-filled tube with an outer diameter of 25 nm and an inner diameter of 15 nM. Alpha-beta heterodimers associate head-to-tail to form protofilaments running lengthwise along the microtubule wall with the beta-tubulin subunit facing the microtubule plus end conferring a structural polarity. Microtubules usually have 13 protofilaments but different protofilament numbers can be found in some organisms and specialized cells. Mg(2+) is required as a cofactor.

It is found in the cytoplasm. Its subcellular location is the cytoskeleton. It catalyses the reaction GTP + H2O = GDP + phosphate + H(+). In terms of biological role, tubulin is the major constituent of microtubules, a cylinder consisting of laterally associated linear protofilaments composed of alpha- and beta-tubulin heterodimers. Microtubules grow by the addition of GTP-tubulin dimers to the microtubule end, where a stabilizing cap forms. Below the cap, tubulin dimers are in GDP-bound state, owing to GTPase activity of alpha-tubulin. This is Tubulin alpha chain (TUB1) from Ajellomyces capsulatus (Darling's disease fungus).